The following is a 421-amino-acid chain: UDP-N-acetylglucosamine 1-carboxyvinyltransferase (421 aa).

Phosphoenolpyruvate is bound at residue 26 to 27 (KN). R96 contacts UDP-N-acetyl-alpha-D-glucosamine. The active-site Proton donor is D120. Residues D308 and V330 each contribute to the UDP-N-acetyl-alpha-D-glucosamine site.

Belongs to the EPSP synthase family. MurA subfamily.

It is found in the cytoplasm. The enzyme catalyses phosphoenolpyruvate + UDP-N-acetyl-alpha-D-glucosamine = UDP-N-acetyl-3-O-(1-carboxyvinyl)-alpha-D-glucosamine + phosphate. The protein operates within cell wall biogenesis; peptidoglycan biosynthesis. Functionally, cell wall formation. Adds enolpyruvyl to UDP-N-acetylglucosamine. This is UDP-N-acetylglucosamine 1-carboxyvinyltransferase from Corynebacterium efficiens (strain DSM 44549 / YS-314 / AJ 12310 / JCM 11189 / NBRC 100395).